The sequence spans 188 residues: MPSPVATVETDSLQQPILGSRRPSNYFWAIAVSVGGTGFLLAGLSSYLQVNLLPFSEPTRLAFLPQGLVMGLYGIAAILLASYLWFVISLDVGGGYNAFDRKTQKATIFRWGFPGKNRRVEITYPLSDIQAVRVDIKEGLNPKRALYLKVKGRGDVPLTRVGQPLPLTELESQGAELARFLAVPLEGL.

A run of 2 helical transmembrane segments spans residues 26–46 and 68–88; these read YFWAIAVSVGGTGFLLAGLSS and LVMGLYGIAAILLASYLWFVI.

Belongs to the Ycf4 family.

The protein localises to the cellular thylakoid membrane. In terms of biological role, seems to be required for the assembly of the photosystem I complex. This chain is Photosystem I assembly protein Ycf4, found in Synechococcus sp. (strain ATCC 27144 / PCC 6301 / SAUG 1402/1) (Anacystis nidulans).